Reading from the N-terminus, the 377-residue chain is Putative F-box protein At3g13830 (377 aa).

The 47-residue stretch at 6–52 (TTTMSTLPMVLVDEILSRVPITSLRSLRSTCKRWEAQSKTNLVGGKA) folds into the F-box domain.

The sequence is that of Putative F-box protein At3g13830 from Arabidopsis thaliana (Mouse-ear cress).